A 506-amino-acid chain; its full sequence is Cysteine--tRNA ligase (506 aa).

Zn(2+) is bound at residue C43. Residues 45-55 (VTVYDLCHLGH) carry the 'HIGH' region motif. 3 residues coordinate Zn(2+): C237, H262, and E266. The short motif at 294–298 (KMSKS) is the 'KMSKS' region element. Residue K297 participates in ATP binding.

This sequence belongs to the class-I aminoacyl-tRNA synthetase family. Monomer. It depends on Zn(2+) as a cofactor.

It localises to the cytoplasm. The enzyme catalyses tRNA(Cys) + L-cysteine + ATP = L-cysteinyl-tRNA(Cys) + AMP + diphosphate. The chain is Cysteine--tRNA ligase from Synechococcus sp. (strain JA-3-3Ab) (Cyanobacteria bacterium Yellowstone A-Prime).